The chain runs to 295 residues: Large ribosomal subunit protein uL2 (295 aa).

The interval 243-295 (WRPHTRGTAMNPVDHPHGGGEGRTRGKHPESPWDGRRRDTRREGVRSTPISLS) is disordered. The span at 256–287 (DHPHGGGEGRTRGKHPESPWDGRRRDTRREGV) shows a compositional bias: basic and acidic residues.

The protein belongs to the universal ribosomal protein uL2 family. Part of the 50S ribosomal subunit. Forms a bridge to the 30S subunit in the 70S ribosome.

One of the primary rRNA binding proteins. Required for association of the 30S and 50S subunits to form the 70S ribosome, for tRNA binding and peptide bond formation. It has been suggested to have peptidyltransferase activity; this is somewhat controversial. Makes several contacts with the 16S rRNA in the 70S ribosome. The polypeptide is Large ribosomal subunit protein uL2 (Aquifex pyrophilus).